A 498-amino-acid chain; its full sequence is Glycerol kinase (498 aa).

Thr11 lines the ADP pocket. ATP is bound by residues Thr11, Ser12, and Ser13. Thr11 contributes to the sn-glycerol 3-phosphate binding site. Arg15 contributes to the ADP binding site. 4 residues coordinate sn-glycerol 3-phosphate: Arg81, Glu82, Tyr133, and Asp242. Residues Arg81, Glu82, Tyr133, Asp242, and Gln243 each contribute to the glycerol site. ADP contacts are provided by Thr264 and Gly307. Residues Thr264, Gly307, Gln311, and Gly412 each coordinate ATP. Positions 412 and 416 each coordinate ADP.

It belongs to the FGGY kinase family.

The enzyme catalyses glycerol + ATP = sn-glycerol 3-phosphate + ADP + H(+). Its pathway is polyol metabolism; glycerol degradation via glycerol kinase pathway; sn-glycerol 3-phosphate from glycerol: step 1/1. Inhibited by fructose 1,6-bisphosphate (FBP). In terms of biological role, key enzyme in the regulation of glycerol uptake and metabolism. Catalyzes the phosphorylation of glycerol to yield sn-glycerol 3-phosphate. The sequence is that of Glycerol kinase from Acidovorax ebreus (strain TPSY) (Diaphorobacter sp. (strain TPSY)).